Here is a 341-residue protein sequence, read N- to C-terminus: Ferredoxin--NADP reductase (341 aa).

Positions 38, 46, 51, 91, 125, 292, and 333 each coordinate FAD.

This sequence belongs to the ferredoxin--NADP reductase type 2 family. In terms of assembly, homodimer. The cofactor is FAD.

It catalyses the reaction 2 reduced [2Fe-2S]-[ferredoxin] + NADP(+) + H(+) = 2 oxidized [2Fe-2S]-[ferredoxin] + NADPH. The protein is Ferredoxin--NADP reductase of Gluconacetobacter diazotrophicus (strain ATCC 49037 / DSM 5601 / CCUG 37298 / CIP 103539 / LMG 7603 / PAl5).